Reading from the N-terminus, the 368-residue chain is MLKRGRGRPGKRRRRVSIETSTCFRPACVKLGAGAGANLRQLASSRRPLRSWWVLYTIIMAAAGAPDGMEEPGMDTEAEAVATEAPARPLNCVEAEAAVGAAAEDSCDARGNLQPAPAQPPGDPAAQASVSNGEDAGGGVGKELVDLKIIWNKTKHDVKVPLDSTGSELKQKIHSITGLPPAMQKVMYKGLVPEDKTLREIKVTSGAKIMVVGSTINDVLAVNTPKDAAQQDAKAEENKKEPLCRQKQHRKVLDKGKPEDVMPSVKGAQERLPTVPLSGMYNKSGGKVRLTFKLEQDQLWIGTKERTEKLPMGSIKNVVSEPIEGHEDYHMMAFQLGPTEASYYWVYWVPTQYVDAIKDTVLGKWQYF.

Residues serine 106 to glycine 139 are disordered. One can recognise a Ubiquitin-like domain in the interval glutamate 143 to aspartate 218. A disordered region spans residues glutamine 231–proline 263. Basic and acidic residues-rich tracts occupy residues alanine 233–cysteine 244 and lysine 251–aspartate 260.

The chain is Ubiquitin domain-containing protein UBFD1 (Ubfd1) from Mus musculus (Mouse).